The chain runs to 243 residues: 3-deoxy-manno-octulosonate cytidylyltransferase (243 aa).

Belongs to the KdsB family.

It localises to the cytoplasm. It catalyses the reaction 3-deoxy-alpha-D-manno-oct-2-ulosonate + CTP = CMP-3-deoxy-beta-D-manno-octulosonate + diphosphate. Its pathway is nucleotide-sugar biosynthesis; CMP-3-deoxy-D-manno-octulosonate biosynthesis; CMP-3-deoxy-D-manno-octulosonate from 3-deoxy-D-manno-octulosonate and CTP: step 1/1. It participates in bacterial outer membrane biogenesis; lipopolysaccharide biosynthesis. Functionally, activates KDO (a required 8-carbon sugar) for incorporation into bacterial lipopolysaccharide in Gram-negative bacteria. This Helicobacter pylori (strain G27) protein is 3-deoxy-manno-octulosonate cytidylyltransferase.